Here is a 146-residue protein sequence, read N- to C-terminus: Ataxin-7-like protein 1 (146 aa).

Disordered stretches follow at residues 1–27 (MTSE…QEGT) and 125–146 (KRNA…QRQV). Over residues 127 to 138 (NASISWSGAESR) the composition is skewed to polar residues.

This is Ataxin-7-like protein 1 (Atxn7l1) from Mus musculus (Mouse).